We begin with the raw amino-acid sequence, 136 residues long: Ubiquinol-cytochrome c reductase complex assembly factor 2 (136 aa).

Residues 1-13 (MAALRYRRFLKLC) constitute a mitochondrion transit peptide.

Interacts with UQCC1. Forms a complex, named COMB/coordinator of mitochondrial CYTB biogenesis, composed of UQCC1, UQCC2, UQCC4, UQCC5 and UQCC6; stabilizes nascent cytochrome b/MT-CYB and promotes its membrane insertion. Forms a complex, named COMA, composed of UQCC1, UQCC2 and UQCC4; activates MT-CYB translation. Forms a complex, named COMC, composed of UQCC1, UQCC2; UQCC3 and UQCC4; mediates MT-CYB hemylation and association with the first nuclear-encoded CIII subunit UQCRQ. As to expression, widely expressed with highest levels in brain, liver, kidney, heart, skeletal muscle, thymus, testis and pancreas (at protein level).

Its subcellular location is the mitochondrion matrix. It is found in the mitochondrion nucleoid. It localises to the mitochondrion. The protein resides in the mitochondrion intermembrane space. The protein localises to the mitochondrion inner membrane. Required for the assembly of the ubiquinol-cytochrome c reductase complex (mitochondrial respiratory chain complex III or cytochrome b-c1 complex). Plays a role in the modulation of respiratory chain activities such as oxygen consumption and ATP production and via its modulation of the respiratory chain activity can regulate skeletal muscle differentiation and insulin secretion by pancreatic beta-cells. Involved in cytochrome b translation and/or stability. This is Ubiquinol-cytochrome c reductase complex assembly factor 2 (Uqcc2) from Mus musculus (Mouse).